Consider the following 311-residue polypeptide: Tricarboxylate transport protein, mitochondrial (311 aa).

Positions 1–13 (MPAPRAPRALAAA) are cleaved as a propeptide — removed in mature form. Solcar repeat units follow at residues 23-111 (THPG…LSNH), 122-208 (TRGL…LRNW), and 218-303 (MNPL…VVKL). Transmembrane regions (helical) follow at residues 29 to 46 (ILAGGLAGGIEICITFPT), 86 to 105 (GLSSLLYGSIPKAAVRFGMF), and 129 to 143 (LGAGVAEAVVVVCPM). S156 carries the post-translational modification Phosphoserine. A run of 3 helical transmembrane segments spans residues 183 to 202 (GLTATVLKQGSNQAIRFFVM), 224 to 241 (GVFGAIAGAASVFGNTPL), and 278 to 297 (GTVPRLGRVCLDVAIVFVIY).

This sequence belongs to the mitochondrial carrier (TC 2.A.29) family. Possesses a short cleavable presequence, which, however, is found to be dispensable both for targeting to mitochondria and insertion into the inner membrane. However, the presequence is required to keep SLC25A1 in a soluble state and thus in an import-competent state. Mature SLC25A1 lacking the presequence is prone to aggregation.

It is found in the mitochondrion inner membrane. It catalyses the reaction (S)-malate(in) + citrate(out) = (S)-malate(out) + citrate(in). It carries out the reaction D-threo-isocitrate(in) + citrate(out) = D-threo-isocitrate(out) + citrate(in). The enzyme catalyses citrate(out) + succinate(in) = citrate(in) + succinate(out). The catalysed reaction is cis-aconitate(in) + citrate(out) = cis-aconitate(out) + citrate(in). It catalyses the reaction trans-aconitate(in) + citrate(out) = trans-aconitate(out) + citrate(in). It carries out the reaction phosphoenolpyruvate(in) + citrate(out) = phosphoenolpyruvate(out) + citrate(in). The enzyme catalyses maleate(in) + citrate(out) = maleate(out) + citrate(in). Functionally, mitochondrial electroneutral antiporter that exports citrate from the mitochondria into the cytosol in exchange for malate. Also able to mediate the exchange of citrate for isocitrate, phosphoenolpyruvate, cis-aconitate and to a lesser extent trans-aconitate, maleate and succinate. In the cytoplasm, citrate plays important roles in fatty acid and sterol synthesis, regulation of glycolysis, protein acetylation, and other physiopathological processes. This is Tricarboxylate transport protein, mitochondrial (SLC25A1) from Homo sapiens (Human).